An 81-amino-acid chain; its full sequence is uncharacterized protein (81 aa).

This is an uncharacterized protein from Synechocystis sp. (strain ATCC 27184 / PCC 6803 / Kazusa).